The following is a 605-amino-acid chain: uncharacterized protein (605 aa).

The interval 111-151 (VNVNDGKPNDIELSSTSKTENDPPLSLHTTPDDLQGNGVNV) is disordered.

It localises to the golgi apparatus. This is an uncharacterized protein from Schizosaccharomyces pombe (strain 972 / ATCC 24843) (Fission yeast).